Reading from the N-terminus, the 391-residue chain is 8-amino-7-oxononanoate synthase (391 aa).

A pyridoxal 5'-phosphate-binding site is contributed by 108–109 (GF). His133 lines the substrate pocket. 3 residues coordinate pyridoxal 5'-phosphate: Ser180, His208, and Thr236. At Lys239 the chain carries N6-(pyridoxal phosphate)lysine. A substrate-binding site is contributed by Thr353.

The protein belongs to the class-II pyridoxal-phosphate-dependent aminotransferase family. BioF subfamily. Homodimer. It depends on pyridoxal 5'-phosphate as a cofactor.

It catalyses the reaction 6-carboxyhexanoyl-[ACP] + L-alanine + H(+) = (8S)-8-amino-7-oxononanoate + holo-[ACP] + CO2. The protein operates within cofactor biosynthesis; biotin biosynthesis. Functionally, catalyzes the decarboxylative condensation of pimeloyl-[acyl-carrier protein] and L-alanine to produce 8-amino-7-oxononanoate (AON), [acyl-carrier protein], and carbon dioxide. The chain is 8-amino-7-oxononanoate synthase from Thermosipho melanesiensis (strain DSM 12029 / CIP 104789 / BI429).